The primary structure comprises 215 residues: Adenylate kinase (215 aa).

An ATP-binding site is contributed by 10 to 15 (GAGKGT). Positions 30–59 (STGDIFRKNISENTPLGMEARSYMDKGLLV) are NMP. AMP is bound by residues threonine 31, arginine 36, 57 to 59 (LLV), 85 to 88 (GFPR), and glutamine 92. Positions 126 to 163 (GRRVCTSCGGSFHIKFNPPTIDGKCNLCGSDIVQRKDD) are LID. Position 127 (arginine 127) interacts with ATP. Zn(2+) contacts are provided by cysteine 130 and cysteine 133. Position 136 to 137 (136 to 137 (SF)) interacts with ATP. Zn(2+) is bound by residues cysteine 150 and cysteine 153. Arginine 160 and arginine 171 together coordinate AMP. Residue lysine 199 participates in ATP binding.

Belongs to the adenylate kinase family. In terms of assembly, monomer.

It localises to the cytoplasm. The catalysed reaction is AMP + ATP = 2 ADP. The protein operates within purine metabolism; AMP biosynthesis via salvage pathway; AMP from ADP: step 1/1. Its function is as follows. Catalyzes the reversible transfer of the terminal phosphate group between ATP and AMP. Plays an important role in cellular energy homeostasis and in adenine nucleotide metabolism. In Clostridium botulinum (strain Eklund 17B / Type B), this protein is Adenylate kinase.